A 473-amino-acid chain; its full sequence is 3-isopropylmalate dehydratase large subunit (473 aa).

C355, C415, and C418 together coordinate [4Fe-4S] cluster. The tract at residues 423–452 is disordered; sequence PDQLAPGERSASTSNRNFEGRQGKGGRTHL.

Belongs to the aconitase/IPM isomerase family. LeuC type 1 subfamily. Heterodimer of LeuC and LeuD. It depends on [4Fe-4S] cluster as a cofactor.

It carries out the reaction (2R,3S)-3-isopropylmalate = (2S)-2-isopropylmalate. The protein operates within amino-acid biosynthesis; L-leucine biosynthesis; L-leucine from 3-methyl-2-oxobutanoate: step 2/4. In terms of biological role, catalyzes the isomerization between 2-isopropylmalate and 3-isopropylmalate, via the formation of 2-isopropylmaleate. This is 3-isopropylmalate dehydratase large subunit from Corynebacterium jeikeium (strain K411).